Consider the following 1372-residue polypeptide: Serine protease pic autotransporter (1372 aa).

The signal sequence occupies residues 1–55 (MNKVYSLKYCPVTGGLIAVSELARRVIKKTCRRLTHILLAGIPAICLCYSQISQA). The 246-residue stretch at 56-301 (GIVRSDIAYQ…NVIPTDYLNQ (246 aa)) folds into the Peptidase S6 domain. Residues His127, Asp155, and Ser258 each act as charge relay system in the active site. The Autotransporter domain maps to 1106–1372 (DTNGDAGAWA…AVNANFRYMF (267 aa)).

In terms of processing, cleaved to release the mature protein from the outer membrane.

The protein resides in the periplasm. It localises to the secreted. The protein localises to the cell surface. Its subcellular location is the cell outer membrane. Involved in intestinal colonization, displays in vitro mucinolytic activity, serum resistance, and hemagglutination. Important to penetrate the intestinal mucus layer. The polypeptide is Serine protease pic autotransporter (pic) (Escherichia coli O44:H18 (strain 042 / EAEC)).